The chain runs to 341 residues: Protein pelota homolog (341 aa).

It belongs to the eukaryotic release factor 1 family. Pelota subfamily. Monomer. A divalent metal cation serves as cofactor.

Its subcellular location is the cytoplasm. May function in recognizing stalled ribosomes, interact with stem-loop structures in stalled mRNA molecules, and effect endonucleolytic cleavage of the mRNA. May play a role in the release non-functional ribosomes and degradation of damaged mRNAs. Has endoribonuclease activity. The chain is Protein pelota homolog from Methanoculleus marisnigri (strain ATCC 35101 / DSM 1498 / JR1).